Reading from the N-terminus, the 555-residue chain is MFS-type transporter VdtG (555 aa).

The disordered stretch occupies residues 1–20 (MNGNGTADKPGPPGGKPFGP). A glycan (N-linked (GlcNAc...) asparagine) is linked at Asn-4. Transmembrane regions (helical) follow at residues 30-50 (TGFK…LTAL), 71-91 (DIGW…LLFG), and 101-121 (WVFL…GAAP). An N-linked (GlcNAc...) asparagine glycan is attached at Asn-122. 2 helical membrane-spanning segments follow: residues 132–152 (IAGL…FFTV) and 162–182 (GIAG…GGGF). Asn-185 carries N-linked (GlcNAc...) asparagine glycosylation. A run of 4 helical transmembrane segments spans residues 190 to 210 (WCFY…LLFL), 232 to 252 (LGNL…QWGG), 262 to 282 (IVAL…VQLW), and 304 to 324 (AFTI…PIWF). The N-linked (GlcNAc...) asparagine glycan is linked to Asn-329. Helical transmembrane passes span 337 to 357 (VMML…GFII), 364 to 384 (TPFM…LTTF), 393 to 413 (WIGY…QASL), 425 to 445 (PIGI…FLAV), and 497 to 517 (LMDV…AAAF). Residues 528–555 (AAGPGGPGGPGGPGGPGGPEGLRGGNKV) are disordered. Residues 530 to 555 (GPGGPGGPGGPGGPGGPEGLRGGNKV) show a composition bias toward gly residues.

Belongs to the major facilitator superfamily. TCR/Tet family.

It is found in the endoplasmic reticulum membrane. Its function is as follows. MFS-type transporter; part of the gene cluster that mediates the biosynthesis of viriditoxin, one of the 'classical' secondary metabolites produced by fungi and that has antibacterial activity. Is not essential for viriditoxin production. The polypeptide is MFS-type transporter VdtG (Byssochlamys spectabilis (Paecilomyces variotii)).